Reading from the N-terminus, the 80-residue chain is Large ribosomal subunit protein eL14 (80 aa).

It belongs to the eukaryotic ribosomal protein eL14 family.

This chain is Large ribosomal subunit protein eL14, found in Methanocaldococcus jannaschii (strain ATCC 43067 / DSM 2661 / JAL-1 / JCM 10045 / NBRC 100440) (Methanococcus jannaschii).